A 385-amino-acid polypeptide reads, in one-letter code: Carbamoyl phosphate synthase small chain (385 aa).

The interval methionine 1–phenylalanine 196 is CPSase. L-glutamine is bound by residues serine 51, glycine 245, and glycine 247. The 188-residue stretch at histidine 197–serine 384 folds into the Glutamine amidotransferase type-1 domain. Cysteine 273 serves as the catalytic Nucleophile. Positions 274, 277, 315, and 318 each coordinate L-glutamine. Active-site residues include histidine 357 and glutamate 359.

It belongs to the CarA family. In terms of assembly, composed of two chains; the small (or glutamine) chain promotes the hydrolysis of glutamine to ammonia, which is used by the large (or ammonia) chain to synthesize carbamoyl phosphate. Tetramer of heterodimers (alpha,beta)4.

The enzyme catalyses hydrogencarbonate + L-glutamine + 2 ATP + H2O = carbamoyl phosphate + L-glutamate + 2 ADP + phosphate + 2 H(+). It catalyses the reaction L-glutamine + H2O = L-glutamate + NH4(+). It participates in amino-acid biosynthesis; L-arginine biosynthesis; carbamoyl phosphate from bicarbonate: step 1/1. Its pathway is pyrimidine metabolism; UMP biosynthesis via de novo pathway; (S)-dihydroorotate from bicarbonate: step 1/3. In terms of biological role, small subunit of the glutamine-dependent carbamoyl phosphate synthetase (CPSase). CPSase catalyzes the formation of carbamoyl phosphate from the ammonia moiety of glutamine, carbonate, and phosphate donated by ATP, constituting the first step of 2 biosynthetic pathways, one leading to arginine and/or urea and the other to pyrimidine nucleotides. The small subunit (glutamine amidotransferase) binds and cleaves glutamine to supply the large subunit with the substrate ammonia. The polypeptide is Carbamoyl phosphate synthase small chain (Buchnera aphidicola subsp. Schizaphis graminum (strain Sg)).